The sequence spans 212 residues: Large ribosomal subunit protein uL3 (212 aa).

Basic residues predominate over residues 128-146 (RHGASRGPMKHGSKYHRRT). The interval 128-164 (RHGASRGPMKHGSKYHRRTGSLGAKGPARVFKGRNLP) is disordered.

Belongs to the universal ribosomal protein uL3 family. In terms of assembly, part of the 50S ribosomal subunit. Forms a cluster with proteins L14 and L19.

Functionally, one of the primary rRNA binding proteins, it binds directly near the 3'-end of the 23S rRNA, where it nucleates assembly of the 50S subunit. In Desulfitobacterium hafniense (strain Y51), this protein is Large ribosomal subunit protein uL3.